Consider the following 438-residue polypeptide: Serine hydroxymethyltransferase 1 (438 aa).

(6S)-5,6,7,8-tetrahydrofolate-binding positions include L130 and 134-136; that span reads GHL. Residue K239 is modified to N6-(pyridoxal phosphate)lysine.

The protein belongs to the SHMT family. Homodimer. It depends on pyridoxal 5'-phosphate as a cofactor.

It is found in the cytoplasm. The enzyme catalyses (6R)-5,10-methylene-5,6,7,8-tetrahydrofolate + glycine + H2O = (6S)-5,6,7,8-tetrahydrofolate + L-serine. It participates in one-carbon metabolism; tetrahydrofolate interconversion. Its pathway is amino-acid biosynthesis; glycine biosynthesis; glycine from L-serine: step 1/1. Functionally, catalyzes the reversible interconversion of serine and glycine with tetrahydrofolate (THF) serving as the one-carbon carrier. This reaction serves as the major source of one-carbon groups required for the biosynthesis of purines, thymidylate, methionine, and other important biomolecules. Also exhibits THF-independent aldolase activity toward beta-hydroxyamino acids, producing glycine and aldehydes, via a retro-aldol mechanism. Thus, is able to catalyze the cleavage of L-allo-threonine. In Mycobacterium tuberculosis (strain ATCC 25618 / H37Rv), this protein is Serine hydroxymethyltransferase 1.